The following is a 224-amino-acid chain: Phosphoribosylformylglycinamidine synthase subunit PurQ (224 aa).

Residues 3-224 (FGVVVFPGSN…GLLEKVVALA (222 aa)) form the Glutamine amidotransferase type-1 domain. Cysteine 86 acts as the Nucleophile in catalysis. Catalysis depends on residues histidine 195 and glutamate 197.

As to quaternary structure, part of the FGAM synthase complex composed of 1 PurL, 1 PurQ and 2 PurS subunits.

Its subcellular location is the cytoplasm. It catalyses the reaction N(2)-formyl-N(1)-(5-phospho-beta-D-ribosyl)glycinamide + L-glutamine + ATP + H2O = 2-formamido-N(1)-(5-O-phospho-beta-D-ribosyl)acetamidine + L-glutamate + ADP + phosphate + H(+). The enzyme catalyses L-glutamine + H2O = L-glutamate + NH4(+). Its pathway is purine metabolism; IMP biosynthesis via de novo pathway; 5-amino-1-(5-phospho-D-ribosyl)imidazole from N(2)-formyl-N(1)-(5-phospho-D-ribosyl)glycinamide: step 1/2. Functionally, part of the phosphoribosylformylglycinamidine synthase complex involved in the purines biosynthetic pathway. Catalyzes the ATP-dependent conversion of formylglycinamide ribonucleotide (FGAR) and glutamine to yield formylglycinamidine ribonucleotide (FGAM) and glutamate. The FGAM synthase complex is composed of three subunits. PurQ produces an ammonia molecule by converting glutamine to glutamate. PurL transfers the ammonia molecule to FGAR to form FGAM in an ATP-dependent manner. PurS interacts with PurQ and PurL and is thought to assist in the transfer of the ammonia molecule from PurQ to PurL. In Nostoc sp. (strain PCC 7120 / SAG 25.82 / UTEX 2576), this protein is Phosphoribosylformylglycinamidine synthase subunit PurQ.